Here is a 147-residue protein sequence, read N- to C-terminus: Protein-export protein SecB (147 aa).

The protein belongs to the SecB family. As to quaternary structure, homotetramer, a dimer of dimers. One homotetramer interacts with 1 SecA dimer.

The protein resides in the cytoplasm. In terms of biological role, one of the proteins required for the normal export of preproteins out of the cell cytoplasm. It is a molecular chaperone that binds to a subset of precursor proteins, maintaining them in a translocation-competent state. It also specifically binds to its receptor SecA. In Neisseria meningitidis serogroup C (strain 053442), this protein is Protein-export protein SecB.